Consider the following 591-residue polypeptide: Protein enabled homolog (591 aa).

Positions 1–111 (MSEQSICQAR…SAMMHALEVL (111 aa)) constitute a WH1 domain. Residues 115–136 (ETGPTLPRQNSQLPAQVQNGPS) show a composition bias toward polar residues. The disordered stretch occupies residues 115 to 146 (ETGPTLPRQNSQLPAQVQNGPSQEELEIQRRQ). Serine 125 is subject to Phosphoserine. A coiled-coil region spans residues 135–265 (PSQEELEIQR…LEWERERRIS (131 aa)). Tandem repeats lie at residues 156–160 (LERER), 161–165 (LERER), 166–170 (MERER), 171–175 (LERER), 176–180 (LERER), 181–185 (LERER), 186–190 (LEQEQ), 191–195 (LERER), and 196–200 (QERER). Residues 156-200 (LERERLERERMERERLERERLERERLERERLEQEQLERERQERER) are 9 X 5 AA tandem repeats of [LMQ]-E-[QR]-E-[QR]. Residues 221–264 (RLDRERQERQERERLERLERERQERERQEQLEREQLEWERERRI) are compositionally biased toward basic and acidic residues. The interval 221 to 379 (RLDRERQERQ…PPLPASGFFL (159 aa)) is disordered. Serine 265 carries the phosphoserine; by PKA modification. Polar residues predominate over residues 275–305 (TPLNSVLGDSSASEPGLQAASQPAETPSQQG). 2 stretches are compositionally biased toward pro residues: residues 311–323 (LAPP…PPGP) and 330–373 (LPPP…PPLP). Residues 391–411 (GLAAAIAGAKLRKVSRMEDTS) form an EVH2 block A region. Positions 391-588 (GLAAAIAGAK…DAIRQELSKS (198 aa)) are EVH2. Positions 400–403 (KLRK) match the KLKR motif. The segment at 405–549 (SRMEDTSFPS…LSQPSANGVQ (145 aa)) is disordered. A compositionally biased stretch (gly residues) spans 432 to 443 (RGNGPLPLGGSG). The interval 442–459 (SGLMEEMSALLARRRRIA) is EVH2 block B. Phosphothreonine is present on isoleucine 465. Phosphoserine occurs at positions 471 and 475. Composition is skewed to polar residues over residues 479-491 (PVTS…STPE) and 499-509 (RTNTMNGSKSP). Position 502 is a phosphothreonine (threonine 502). Phosphoserine is present on residues serine 506, serine 508, and serine 512. Polar residues predominate over residues 538 to 549 (TPLSQPSANGVQ). The interval 554–588 (DYDRLKQDILDEMRKELTKLKEELIDAIRQELSKS) is EVH2 block C. Residues 557–587 (RLKQDILDEMRKELTKLKEELIDAIRQELSK) are a coiled coil.

Belongs to the Ena/VASP family. As to quaternary structure, homotetramer. Interacts with APBB1IP, APBB1, PFN1 and ROBO4. Isoforms, containing the polyproline-rich regions with PPLP motifs, bind the WW domain of APBB1IP. Isoforms, containing the PPSY motif, bind, in vitro, to the WW2 and WW3 domains of NEDD4 and to the WW1 domain of YAP1. Binds the SH3 domain of BAIAP2-alpha but only after the autoinhibitory region of BAIAP2-alpha has been blocked by interaction with CDC42. Interacts, via the EVH1/WH1 domain, with the Pro-rich domains from VCL, ZYX and Listeria monocytogenes actA and with TES (via LIM domains). The TES LIM domain and the Pro-rich domains from VCL or ZYX compete for the same binding site. Interaction with ZYX is important for targeting ENAH to focal adhesions and enhances production of actin-rich structures at the apical surface of cells. Interacts, through the Pro-rich region, with the C-terminal SH3 domain of DNMPB. Binds GPHN. Interacts with FAT1 (via EVH1 domains). Heterotrimer with TES and ACTL7A. Interacts with PRPF40A. Post-translationally, NTN1-induced PKA phosphorylation on Ser-265 directly parallels the formation of filopodial protrusions. As to expression, expressed in myoepithelia of parotid, breast, bronchial glands and sweat glands. Expressed in colon-rectum muscolaris mucosae epithelium, pancreas acinar ductal epithelium, endometrium epithelium, prostate fibromuscolar stroma and placenta vascular media. Overexpressed in a majority of breast cancer cell lines and primary breast tumor lesions.

It is found in the cytoplasm. It localises to the cytoskeleton. The protein resides in the cell projection. Its subcellular location is the lamellipodium. The protein localises to the filopodium. It is found in the synapse. It localises to the cell junction. The protein resides in the focal adhesion. Functionally, ena/VASP proteins are actin-associated proteins involved in a range of processes dependent on cytoskeleton remodeling and cell polarity such as axon guidance and lamellipodial and filopodial dynamics in migrating cells. ENAH induces the formation of F-actin rich outgrowths in fibroblasts. Acts synergistically with BAIAP2-alpha and downstream of NTN1 to promote filipodia formation. The chain is Protein enabled homolog (ENAH) from Homo sapiens (Human).